Consider the following 35-residue polypeptide: Photosystem II reaction center protein M (35 aa).

A helical membrane pass occupies residues 7–27 (GFIATILFVLVPTVFLLILYI).

This sequence belongs to the PsbM family. As to quaternary structure, PSII is composed of 1 copy each of membrane proteins PsbA, PsbB, PsbC, PsbD, PsbE, PsbF, PsbH, PsbI, PsbJ, PsbK, PsbL, PsbM, PsbT, PsbX, PsbY, PsbZ, Psb30/Ycf12, peripheral proteins PsbO, CyanoQ (PsbQ), PsbU, PsbV and a large number of cofactors. It forms dimeric complexes.

Its subcellular location is the cellular thylakoid membrane. In terms of biological role, one of the components of the core complex of photosystem II (PSII). PSII is a light-driven water:plastoquinone oxidoreductase that uses light energy to abstract electrons from H(2)O, generating O(2) and a proton gradient subsequently used for ATP formation. It consists of a core antenna complex that captures photons, and an electron transfer chain that converts photonic excitation into a charge separation. This subunit is found at the monomer-monomer interface. The protein is Photosystem II reaction center protein M of Crocosphaera subtropica (strain ATCC 51142 / BH68) (Cyanothece sp. (strain ATCC 51142)).